Reading from the N-terminus, the 503-residue chain is Probable cytosol aminopeptidase (503 aa).

Residues K270 and D275 each coordinate Mn(2+). The active site involves K282. D293, D352, and E354 together coordinate Mn(2+). The active site involves R356.

Belongs to the peptidase M17 family. Requires Mn(2+) as cofactor.

The protein localises to the cytoplasm. It carries out the reaction Release of an N-terminal amino acid, Xaa-|-Yaa-, in which Xaa is preferably Leu, but may be other amino acids including Pro although not Arg or Lys, and Yaa may be Pro. Amino acid amides and methyl esters are also readily hydrolyzed, but rates on arylamides are exceedingly low.. The enzyme catalyses Release of an N-terminal amino acid, preferentially leucine, but not glutamic or aspartic acids.. In terms of biological role, presumably involved in the processing and regular turnover of intracellular proteins. Catalyzes the removal of unsubstituted N-terminal amino acids from various peptides. The polypeptide is Probable cytosol aminopeptidase (Shigella dysenteriae serotype 1 (strain Sd197)).